The sequence spans 231 residues: Cytochrome c oxidase assembly factor 7 (231 aa).

Sel1-like repeat units lie at residues 34-66 (PDGC…DQNE), 68-104 (SESC…NKGG), 108-145 (IDSC…DGNF), 146-182 (AASC…SLGH), and 183-218 (MWGC…DLHR).

The protein belongs to the hcp beta-lactamase family.

It localises to the mitochondrion intermembrane space. Functionally, may be required for assembly of mitochondrial respiratory chain complexes. The chain is Cytochrome c oxidase assembly factor 7 (coa7) from Xenopus tropicalis (Western clawed frog).